Here is a 942-residue protein sequence, read N- to C-terminus: MQNKIIIHGARAHNLKNIDVEIPRDKLVVVTGLSGSGKSSLAFDTIYAEGQRRYVESLSAYARQFLGNMEKPDVDSIDGLSPAISIDQKTTSKNPRSTVGTVTEINDYLRLLYARVGTPYCINGHGAITASSAEQIVEQVLALPERTRMQILAPIVRRKKGQHKTIFEKIQKDGYVRVRVDGDIFDVTEVPELSKSKMHNIEVVIDRLVNKDGIRSRLFDSVEAALRLGDGYLMIDTMDGNELLFSEHYSCPVCGFTVPELEPRLFSFNAPFGSCPTCDGLGIKLEVDLDLVVPDPSKSLKEGALAPWNPISSNYYPTMLEQAMASFGVDMDTPFEALTEEERDLVLYGSGDREFHFHYVNDFGGERNIDIPFEGVVTNVNRRYHETNSDYTRNVMRGYMNELTCATCHGYRLNDQALCVHVGGEEGPHIGQISELSIADHLQLLEELELTENESTIAKPIVKEIHDRLTFLNNVGLNYLTLSRAAGTLSGGESQRIRLATQIGSNLSGVLYILDEPSIGLHQRDNDRLIESLKKMRDLGNTLIVVEHDEDTMMQADWLIDVGPGAGEFGGEIIASGTPKQVAKNKKSITGQYLSGKKFIPVPLERRSGNGRFIEIKGAAQNNLQSLDVRFPLGKFIAVTGVSGSGKSTLVNSILKKAVAQKLNRNADKPGKYHSISGIEHIERLIDIDQSPIGRTPRSNPATYTGVFDDIRDLFARTNEAKIRGYKKGRFSFNVKGGRCEACSGDGIIKIEMHFLPDVYVPCEVCHGRRYNSETLEVHYKEKNIAEVLDMTVDDALVFFSAIPKIARKIQTIKDVGLGYVTLGQPATTLSGGEAQRMKLASELHKRSTGKSLYILDEPTTGLHTDDIARLLKVLERFVDDGNTVLVIEHNLDVIKSADHIIDLGPEGGVGGGQIVATGTPEEVAQVKESYTGHYLKVKLQQ.

Gly32–Ser39 is an ATP binding site. The segment at Cys251 to Cys278 adopts a C4-type zinc-finger fold. ABC transporter domains follow at residues Trp308–Ile589 and Gly609–Lys937. Gly641 to Ser648 is an ATP binding site. The C4-type zinc finger occupies Cys740–Cys766.

It belongs to the ABC transporter superfamily. UvrA family. As to quaternary structure, forms a heterotetramer with UvrB during the search for lesions.

The protein resides in the cytoplasm. The UvrABC repair system catalyzes the recognition and processing of DNA lesions. UvrA is an ATPase and a DNA-binding protein. A damage recognition complex composed of 2 UvrA and 2 UvrB subunits scans DNA for abnormalities. When the presence of a lesion has been verified by UvrB, the UvrA molecules dissociate. The protein is UvrABC system protein A of Streptococcus pyogenes serotype M6 (strain ATCC BAA-946 / MGAS10394).